Here is a 404-residue protein sequence, read N- to C-terminus: Phosphoglycerate kinase (404 aa).

Substrate is bound by residues 21 to 23 (DFN), Arg-36, 59 to 62 (HLGR), Arg-119, and Arg-162. Residues Lys-213, Gly-300, Glu-331, and 360–363 (GGDS) contribute to the ATP site.

The protein belongs to the phosphoglycerate kinase family. In terms of assembly, monomer.

Its subcellular location is the cytoplasm. The catalysed reaction is (2R)-3-phosphoglycerate + ATP = (2R)-3-phospho-glyceroyl phosphate + ADP. It participates in carbohydrate degradation; glycolysis; pyruvate from D-glyceraldehyde 3-phosphate: step 2/5. In Oenococcus oeni (strain ATCC BAA-331 / PSU-1), this protein is Phosphoglycerate kinase.